A 337-amino-acid chain; its full sequence is Fructose-1,6-bisphosphatase class 1 (337 aa).

Mg(2+)-binding residues include Glu89, Asp112, Leu114, and Asp115. Substrate is bound by residues 115–118 (DGSS), Asn208, Tyr241, and Lys271. Glu277 serves as a coordination point for Mg(2+).

It belongs to the FBPase class 1 family. As to quaternary structure, homotetramer. Mg(2+) serves as cofactor.

Its subcellular location is the cytoplasm. The enzyme catalyses beta-D-fructose 1,6-bisphosphate + H2O = beta-D-fructose 6-phosphate + phosphate. It participates in carbohydrate biosynthesis; gluconeogenesis. The protein is Fructose-1,6-bisphosphatase class 1 of Psychromonas ingrahamii (strain DSM 17664 / CCUG 51855 / 37).